The primary structure comprises 376 residues: TraB domain-containing protein (376 aa).

N-acetylmethionine is present on Met1. The interval Met1 to Pro34 is disordered. A compositionally biased stretch (low complexity) spans Val14–Pro27. Position 65 is a phosphothreonine (Thr65).

This Homo sapiens (Human) protein is TraB domain-containing protein (TRABD).